A 475-amino-acid polypeptide reads, in one-letter code: Ribulose bisphosphate carboxylase large chain (475 aa).

A propeptide spanning residues 1–2 (MS) is cleaved from the precursor. Pro-3 bears the N-acetylproline mark. At Lys-14 the chain carries N6,N6,N6-trimethyllysine. Substrate contacts are provided by Asn-123 and Thr-173. Residue Lys-175 is the Proton acceptor of the active site. Substrate is bound at residue Lys-177. The Mg(2+) site is built by Lys-201, Asp-203, and Glu-204. Lys-201 bears the N6-carboxylysine mark. Catalysis depends on His-294, which acts as the Proton acceptor. The substrate site is built by Arg-295, His-327, and Ser-379.

Belongs to the RuBisCO large chain family. Type I subfamily. In terms of assembly, heterohexadecamer of 8 large chains and 8 small chains; disulfide-linked. The disulfide link is formed within the large subunit homodimers. It depends on Mg(2+) as a cofactor. The disulfide bond which can form in the large chain dimeric partners within the hexadecamer appears to be associated with oxidative stress and protein turnover.

The protein localises to the plastid. It is found in the chloroplast. The enzyme catalyses 2 (2R)-3-phosphoglycerate + 2 H(+) = D-ribulose 1,5-bisphosphate + CO2 + H2O. It carries out the reaction D-ribulose 1,5-bisphosphate + O2 = 2-phosphoglycolate + (2R)-3-phosphoglycerate + 2 H(+). In terms of biological role, ruBisCO catalyzes two reactions: the carboxylation of D-ribulose 1,5-bisphosphate, the primary event in carbon dioxide fixation, as well as the oxidative fragmentation of the pentose substrate in the photorespiration process. Both reactions occur simultaneously and in competition at the same active site. In Piper cenocladum (Ant piper), this protein is Ribulose bisphosphate carboxylase large chain.